We begin with the raw amino-acid sequence, 152 residues long: Nucleoside diphosphate kinase (152 aa).

Residues Lys-9, Phe-57, Arg-85, Thr-91, Arg-102, and Asn-112 each coordinate ATP. His-115 serves as the catalytic Pros-phosphohistidine intermediate.

The protein belongs to the NDK family. Homotetramer. Mg(2+) is required as a cofactor.

It localises to the cytoplasm. The enzyme catalyses a 2'-deoxyribonucleoside 5'-diphosphate + ATP = a 2'-deoxyribonucleoside 5'-triphosphate + ADP. It carries out the reaction a ribonucleoside 5'-diphosphate + ATP = a ribonucleoside 5'-triphosphate + ADP. Major role in the synthesis of nucleoside triphosphates other than ATP. The ATP gamma phosphate is transferred to the NDP beta phosphate via a ping-pong mechanism, using a phosphorylated active-site intermediate. The sequence is that of Nucleoside diphosphate kinase from Rhodopirellula baltica (strain DSM 10527 / NCIMB 13988 / SH1).